The following is a 549-amino-acid chain: Small ribosomal subunit protein bS1 (549 aa).

6 S1 motif domains span residues 21–87 (GSIV…LSRE), 105–171 (KATV…VSRR), 192–260 (GSEV…LGLK), 277–347 (NSKL…LGLK), 364–434 (GDKV…LGIK), and 451–512 (GAVV…LSVK).

Belongs to the bacterial ribosomal protein bS1 family.

In terms of biological role, binds mRNA; thus facilitating recognition of the initiation point. It is needed to translate mRNA with a short Shine-Dalgarno (SD) purine-rich sequence. The chain is Small ribosomal subunit protein bS1 (rpsA) from Haemophilus influenzae (strain ATCC 51907 / DSM 11121 / KW20 / Rd).